A 239-amino-acid chain; its full sequence is Ribosomal RNA small subunit methyltransferase G (239 aa).

S-adenosyl-L-methionine is bound by residues G79, F84, 130-131 (AE), and R149. A disordered region spans residues 218–239 (KKTKTPKKYPRQAGTPSKKPIS).

This sequence belongs to the methyltransferase superfamily. RNA methyltransferase RsmG family.

It is found in the cytoplasm. Functionally, specifically methylates the N7 position of a guanine in 16S rRNA. This Leuconostoc mesenteroides subsp. mesenteroides (strain ATCC 8293 / DSM 20343 / BCRC 11652 / CCM 1803 / JCM 6124 / NCDO 523 / NBRC 100496 / NCIMB 8023 / NCTC 12954 / NRRL B-1118 / 37Y) protein is Ribosomal RNA small subunit methyltransferase G.